The chain runs to 82 residues: RNA-binding protein Hfq (82 aa).

The 60-residue stretch at aspartate 9–valine 68 folds into the Sm domain.

Belongs to the Hfq family. Homohexamer.

RNA chaperone that binds small regulatory RNA (sRNAs) and mRNAs to facilitate mRNA translational regulation in response to envelope stress, environmental stress and changes in metabolite concentrations. Also binds with high specificity to tRNAs. This chain is RNA-binding protein Hfq, found in Pseudomonas aeruginosa.